A 480-amino-acid chain; its full sequence is CASP8 and FADD-like apoptosis regulator (480 aa).

DED domains follow at residues 1–73 (MSAE…RILK) and 92–170 (DYRV…KIQK). The segment at 1–195 (MSAEVIHQVE…LQAAIQKSFK (195 aa)) is interaction with CASP8. Residues 1-227 (MSAEVIHQVE…GTQQEPVKKS (227 aa)) form an interaction with FADD region. The tract at residues 1–305 (MSAEVIHQVE…FACMPEHRDY (305 aa)) is interaction with CASP8 propeptide. Positions 1–435 (MSAEVIHQVE…CLSQKLRQER (435 aa)) are not proteolytically processed and involved in apoptosis inhibition. Residues 192-435 (KSFKDPSNNF…CLSQKLRQER (244 aa)) are interaction with CASP3. The interval 192–480 (KSFKDPSNNF…LRKKLIPSYT (289 aa)) is interaction with TRAF1 and TRAF2. The interaction with CASP8 subunits p18 and p10 stretch occupies residues 217-480 (LGTQQEPVKK…LRKKLIPSYT (264 aa)). The segment at 263–358 (ETELLRDTFT…AGKPKIFFIQ (96 aa)) is caspase. The interval 370-480 (SSLLEVDGPA…LRKKLIPSYT (111 aa)) is interaction with CASP8.

Belongs to the peptidase C14A family. TNFRSF6 stimulation triggers recruitment to the death-inducing signaling complex (DISC) formed by TNFRSF6, FADD and CASP8. A proteolytic fragment (p43) stays associated with the DISC. Interacts with RIPK1. Post-translationally, proteolytically processed by CASP8 generating subunit p43 and p12.

In terms of biological role, apoptosis regulator protein which may function as a crucial link between cell survival and cell death pathways in mammalian cells. Acts as an inhibitor of TNFRSF6 mediated apoptosis. A proteolytic fragment (p43) is likely retained in the death-inducing signaling complex (DISC) thereby blocking further recruitment and processing of caspase-8 at the complex. Full length and shorter isoforms have been shown either to induce apoptosis or to reduce TNFRSF-triggered apoptosis. Lacks enzymatic (caspase) activity. This is CASP8 and FADD-like apoptosis regulator (CFLAR) from Pongo abelii (Sumatran orangutan).